The sequence spans 427 residues: CCA-adding enzyme (427 aa).

ATP contacts are provided by Ser-50 and Lys-53. CTP-binding residues include Ser-50 and Lys-53. Mg(2+)-binding residues include Asp-61, Asp-63, and Asp-112. ATP-binding residues include His-135, Lys-155, and Tyr-164. CTP is bound by residues His-135, Lys-155, and Tyr-164.

The protein belongs to the tRNA nucleotidyltransferase/poly(A) polymerase family. Archaeal CCA-adding enzyme subfamily. As to quaternary structure, homodimer. It depends on Mg(2+) as a cofactor.

The enzyme catalyses a tRNA precursor + 2 CTP + ATP = a tRNA with a 3' CCA end + 3 diphosphate. It carries out the reaction a tRNA with a 3' CCA end + 2 CTP + ATP = a tRNA with a 3' CCACCA end + 3 diphosphate. Functionally, catalyzes the addition and repair of the essential 3'-terminal CCA sequence in tRNAs without using a nucleic acid template. Adds these three nucleotides in the order of C, C, and A to the tRNA nucleotide-73, using CTP and ATP as substrates and producing inorganic pyrophosphate. tRNA 3'-terminal CCA addition is required both for tRNA processing and repair. Also involved in tRNA surveillance by mediating tandem CCA addition to generate a CCACCA at the 3' terminus of unstable tRNAs. While stable tRNAs receive only 3'-terminal CCA, unstable tRNAs are marked with CCACCA and rapidly degraded. The polypeptide is CCA-adding enzyme (Picrophilus torridus (strain ATCC 700027 / DSM 9790 / JCM 10055 / NBRC 100828 / KAW 2/3)).